A 290-amino-acid polypeptide reads, in one-letter code: Acetyl-coenzyme A carboxylase carboxyl transferase subunit beta (290 aa).

The 264-residue stretch at 27-290 folds into the CoA carboxyltransferase N-terminal domain; the sequence is LWVKCPSCEA…LQRQPADALA (264 aa). The Zn(2+) site is built by Cys-31, Cys-34, Cys-50, and Cys-53. The C4-type zinc-finger motif lies at 31 to 53; that stretch reads CPSCEAVLYRNDVDANLHVCPKC.

This sequence belongs to the AccD/PCCB family. As to quaternary structure, acetyl-CoA carboxylase is a heterohexamer composed of biotin carboxyl carrier protein (AccB), biotin carboxylase (AccC) and two subunits each of ACCase subunit alpha (AccA) and ACCase subunit beta (AccD). Zn(2+) serves as cofactor.

It localises to the cytoplasm. The enzyme catalyses N(6)-carboxybiotinyl-L-lysyl-[protein] + acetyl-CoA = N(6)-biotinyl-L-lysyl-[protein] + malonyl-CoA. The protein operates within lipid metabolism; malonyl-CoA biosynthesis; malonyl-CoA from acetyl-CoA: step 1/1. Its function is as follows. Component of the acetyl coenzyme A carboxylase (ACC) complex. Biotin carboxylase (BC) catalyzes the carboxylation of biotin on its carrier protein (BCCP) and then the CO(2) group is transferred by the transcarboxylase to acetyl-CoA to form malonyl-CoA. The protein is Acetyl-coenzyme A carboxylase carboxyl transferase subunit beta of Burkholderia cenocepacia (strain ATCC BAA-245 / DSM 16553 / LMG 16656 / NCTC 13227 / J2315 / CF5610) (Burkholderia cepacia (strain J2315)).